Reading from the N-terminus, the 49-residue chain is Small ribosomal subunit protein eS31 (49 aa).

Zn(2+)-binding residues include Cys21, Cys24, Cys39, and Cys42. A C4-type zinc finger spans residues 21 to 42 (CPRCGPGTFLADHKNRLTCGKC).

This sequence belongs to the eukaryotic ribosomal protein eS31 family. In terms of assembly, part of the 30S ribosomal subunit. Zn(2+) serves as cofactor.

The polypeptide is Small ribosomal subunit protein eS31 (Methanosarcina barkeri (strain Fusaro / DSM 804)).